A 307-amino-acid chain; its full sequence is UDP-3-O-acyl-N-acetylglucosamine deacetylase (307 aa).

Zn(2+)-binding residues include His-79, His-239, and Asp-243. His-266 functions as the Proton donor in the catalytic mechanism.

Belongs to the LpxC family. It depends on Zn(2+) as a cofactor.

It catalyses the reaction a UDP-3-O-[(3R)-3-hydroxyacyl]-N-acetyl-alpha-D-glucosamine + H2O = a UDP-3-O-[(3R)-3-hydroxyacyl]-alpha-D-glucosamine + acetate. It participates in glycolipid biosynthesis; lipid IV(A) biosynthesis; lipid IV(A) from (3R)-3-hydroxytetradecanoyl-[acyl-carrier-protein] and UDP-N-acetyl-alpha-D-glucosamine: step 2/6. Functionally, catalyzes the hydrolysis of UDP-3-O-myristoyl-N-acetylglucosamine to form UDP-3-O-myristoylglucosamine and acetate, the committed step in lipid A biosynthesis. The polypeptide is UDP-3-O-acyl-N-acetylglucosamine deacetylase (Tolumonas auensis (strain DSM 9187 / NBRC 110442 / TA 4)).